The following is a 92-amino-acid chain: MARSLKKGPFVDDHLMSKMEKLVASEQKQVVKTWSRRSTIFPQFIGHTIAVYDGRKHVPVYITEDMVGHKLGEFAPTRTYKGHLADDKKTRR.

The protein belongs to the universal ribosomal protein uS19 family.

In terms of biological role, protein S19 forms a complex with S13 that binds strongly to the 16S ribosomal RNA. This Bacillus cereus (strain B4264) protein is Small ribosomal subunit protein uS19.